A 161-amino-acid polypeptide reads, in one-letter code: Ubiquitin-conjugating enzyme E2Q-like protein 1 (161 aa).

One can recognise a UBC core domain in the interval 1–154; it reads MKELQDIARL…VKTHEKYGWV (154 aa). Cysteine 88 functions as the Glycyl thioester intermediate in the catalytic mechanism.

It belongs to the ubiquitin-conjugating enzyme family. Interacts with FBXW7.

It is found in the nucleus. It carries out the reaction S-ubiquitinyl-[E1 ubiquitin-activating enzyme]-L-cysteine + [E2 ubiquitin-conjugating enzyme]-L-cysteine = [E1 ubiquitin-activating enzyme]-L-cysteine + S-ubiquitinyl-[E2 ubiquitin-conjugating enzyme]-L-cysteine.. It functions in the pathway protein modification; protein ubiquitination. Functionally, probable E2 ubiquitin-protein ligase that catalyzes the covalent attachment of ubiquitin to target proteins. May facilitate the monoubiquitination and degradation of MTOR and CCNE1 through interaction with FBXW7. The protein is Ubiquitin-conjugating enzyme E2Q-like protein 1 (UBE2QL1) of Homo sapiens (Human).